The following is a 153-amino-acid chain: Deoxyuridine 5'-triphosphate nucleotidohydrolase (153 aa).

Substrate contacts are provided by residues 71-73 (RSG), Asn-84, 88-90 (TID), and Lys-98.

Belongs to the dUTPase family. It depends on Mg(2+) as a cofactor.

The catalysed reaction is dUTP + H2O = dUMP + diphosphate + H(+). It participates in pyrimidine metabolism; dUMP biosynthesis; dUMP from dCTP (dUTP route): step 2/2. In terms of biological role, this enzyme is involved in nucleotide metabolism: it produces dUMP, the immediate precursor of thymidine nucleotides and it decreases the intracellular concentration of dUTP so that uracil cannot be incorporated into DNA. This Ehrlichia canis (strain Jake) protein is Deoxyuridine 5'-triphosphate nucleotidohydrolase.